A 96-amino-acid polypeptide reads, in one-letter code: Putative pterin-4-alpha-carbinolamine dehydratase (96 aa).

Belongs to the pterin-4-alpha-carbinolamine dehydratase family.

It catalyses the reaction (4aS,6R)-4a-hydroxy-L-erythro-5,6,7,8-tetrahydrobiopterin = (6R)-L-erythro-6,7-dihydrobiopterin + H2O. The sequence is that of Putative pterin-4-alpha-carbinolamine dehydratase from Prochlorococcus marinus (strain MIT 9515).